Here is a 123-residue protein sequence, read N- to C-terminus: Small ribosomal subunit protein uS12 (123 aa).

Aspartate 89 is modified (3-methylthioaspartic acid).

This sequence belongs to the universal ribosomal protein uS12 family. In terms of assembly, part of the 30S ribosomal subunit. Contacts proteins S8 and S17. May interact with IF1 in the 30S initiation complex.

Functionally, with S4 and S5 plays an important role in translational accuracy. Interacts with and stabilizes bases of the 16S rRNA that are involved in tRNA selection in the A site and with the mRNA backbone. Located at the interface of the 30S and 50S subunits, it traverses the body of the 30S subunit contacting proteins on the other side and probably holding the rRNA structure together. The combined cluster of proteins S8, S12 and S17 appears to hold together the shoulder and platform of the 30S subunit. This is Small ribosomal subunit protein uS12 from Pelagibacter ubique (strain HTCC1062).